The sequence spans 576 residues: Chaperonin CPN60-2, mitochondrial (576 aa).

The transit peptide at 1-34 directs the protein to the mitochondrion; it reads MYRAAASLASKARQAGSSSAARQVGSRLAWSRNY.

Belongs to the chaperonin (HSP60) family.

Its subcellular location is the mitochondrion. In terms of biological role, implicated in mitochondrial protein import and macromolecular assembly. May facilitate the correct folding of imported proteins. May also prevent misfolding and promote the refolding and proper assembly of unfolded polypeptides generated under stress conditions in the mitochondrial matrix. The chain is Chaperonin CPN60-2, mitochondrial (CPN60II) from Zea mays (Maize).